A 79-amino-acid polypeptide reads, in one-letter code: Cyclin-dependent kinases regulatory subunit 2 (79 aa).

Residue K4 is modified to N6-acetyllysine.

Belongs to the CKS family. In terms of assembly, forms a homohexamer that can probably bind six kinase subunits.

Binds to the catalytic subunit of the cyclin dependent kinases and is essential for their biological function. The protein is Cyclin-dependent kinases regulatory subunit 2 (CKS2) of Bos taurus (Bovine).